A 721-amino-acid polypeptide reads, in one-letter code: Tripartite terminase subunit 1 (721 aa).

The segment at 189-217 (CLKCYEELSLVPNQGKSIRKRLAGKFCNH) adopts a C3H1-type zinc-finger fold. 625–632 (YNDVFGKQ) contacts ATP.

This sequence belongs to the herpesviridae TRM1 protein family. In terms of assembly, associates with TRM2 and TRM3 to form the tripartite terminase complex. Interacts with portal protein.

It localises to the host nucleus. Its function is as follows. Component of the molecular motor that translocates viral genomic DNA in empty capsid during DNA packaging. Forms a tripartite terminase complex together with TRM2 and TRM3 in the host cytoplasm. Once the complex reaches the host nucleus, it interacts with the capsid portal vertex. This portal forms a ring in which genomic DNA is translocated into the capsid. TRM1 carries an endonuclease activity that plays an important role for the cleavage of concatemeric viral DNA into unit length genomes. This chain is Tripartite terminase subunit 1, found in Homo sapiens (Human).